A 233-amino-acid polypeptide reads, in one-letter code: Uracil-DNA glycosylase (233 aa).

Asp-70 (proton acceptor) is an active-site residue.

Belongs to the uracil-DNA glycosylase (UDG) superfamily. UNG family.

Its subcellular location is the cytoplasm. It carries out the reaction Hydrolyzes single-stranded DNA or mismatched double-stranded DNA and polynucleotides, releasing free uracil.. Excises uracil residues from the DNA which can arise as a result of misincorporation of dUMP residues by DNA polymerase or due to deamination of cytosine. In Helicobacter pylori (strain Shi470), this protein is Uracil-DNA glycosylase.